Here is a 460-residue protein sequence, read N- to C-terminus: Muscarinic acetylcholine receptor M1 (460 aa).

Residues 1–22 (MNTSAPPAVSPNITVLAPGKGP) are Extracellular-facing. 2 N-linked (GlcNAc...) asparagine glycosylation sites follow: Asn-2 and Asn-12. A helical membrane pass occupies residues 23–48 (WQVAFIGITTGLLSLATVTGNLLVLI). Over 49–62 (SFKVNTELKTVNNY) the chain is Cytoplasmic. A helical membrane pass occupies residues 63 to 84 (FLLSLACADLIIGTFSMNLYTT). Over 85–95 (YLLMGHWALGT) the chain is Extracellular. The helical transmembrane segment at 96 to 121 (LACDLWLALDYVASNASVMNLLLISF) threads the bilayer. Cysteines 98 and 178 form a disulfide. Residues 122-142 (DRYFSVTRPLSYRAKRTPRRA) are Cytoplasmic-facing. Residues 143 to 164 (ALMIGLAWLVSFVLWAPAILFW) form a helical membrane-spanning segment. At 165 to 185 (QYLVGERTVLAGQCYIQFLSQ) the chain is on the extracellular side. Residues 186-209 (PIITFGTAMAAFYLPVTVMCTLYW) traverse the membrane as a helical segment. Residues 210–366 (RIYRETENRA…LVKEKKAART (157 aa)) lie on the Cytoplasmic side of the membrane. Disordered regions lie at residues 225–256 (LQGS…ETPP), 274–296 (WKEE…GEEP), and 310–351 (EAQA…QLAK). Thr-230 is modified (phosphothreonine). The span at 238–247 (SSSSERSQPG) shows a compositional bias: low complexity. Residues 328-343 (RPTRKGRERAGKGQKP) show a composition bias toward basic residues. The helical transmembrane segment at 367-390 (LSAILLAFIVTWTPYNIMVLVSTF) threads the bilayer. Residues 391-397 (CKDCVPE) are Extracellular-facing. Residues 398–420 (TLWELGYWLCYVNSTINPMCYAL) traverse the membrane as a helical segment. The Cytoplasmic portion of the chain corresponds to 421-460 (CNKAFRDTFRLLLLCRWDKRRWRKIPKRPGSVHRTPSRQC). A Phosphothreonine modification is found at Thr-428. Ser-451 is subject to Phosphoserine. Thr-455 carries the post-translational modification Phosphothreonine. Ser-457 is subject to Phosphoserine.

The protein belongs to the G-protein coupled receptor 1 family. Muscarinic acetylcholine receptor subfamily. CHRM1 sub-subfamily. Interacts with GPRASP2. Interacts with TMEM147.

The protein localises to the cell membrane. It is found in the postsynaptic cell membrane. The muscarinic acetylcholine receptor mediates various cellular responses, including inhibition of adenylate cyclase, breakdown of phosphoinositides and modulation of potassium channels through the action of G proteins. Primary transducing effect is Pi turnover. The chain is Muscarinic acetylcholine receptor M1 (CHRM1) from Sus scrofa (Pig).